The primary structure comprises 676 residues: Beta-galactosidase BgaP (676 aa).

Arg-112 contacts substrate. Position 116 (Cys-116) interacts with Zn(2+). Asn-150 serves as a coordination point for substrate. Glu-151 acts as the Proton donor in catalysis. 3 residues coordinate Zn(2+): Cys-156, Cys-158, and Cys-161. Catalysis depends on Glu-308, which acts as the Nucleophile. Residues Trp-316 and 356 to 359 each bind substrate; that span reads EKYH.

The protein belongs to the glycosyl hydrolase 42 family. In terms of assembly, homodimer.

The enzyme catalyses Hydrolysis of terminal non-reducing beta-D-galactose residues in beta-D-galactosides.. Its activity is regulated as follows. No activity lost during treatment with 100 mM EDTA after 2 hours, and the addition of 1 mM MgCl(2), 1 mM CaCl(2) or 1 mM MnCl(2) has no effect. However, the enzyme activity is inhibited by Zn(2+), Cu(2+), Ni(2+) and Co(2+) to different extents. Addition of Na(+) or K(+) slightly stimulates the enzyme activity at low concentrations and the optimal concentration is 250 mM. A further increase of their concentration of ions above the optimum value results in a decrease in enzyme activity. The enzyme is still active even in the presence of Na(+) or K(+) at a concentration up to 5 M. Hydrolyzes lactose, o-nitrophenyl-beta-D-galactopyranoside (ONPG), p-nitrophenyl-beta-D-galactopyranoside (PNPG), 5-bromo-4-chloro-3-indolyl-beta-D-galactopyranoside (X-gal), o-nitrophenyl-beta-D-fucopyranoside, p-nitrophenyl-beta-D-mannoside, o-nitrophenyl-beta-D-glucoside, p-nitrophenyl-beta-D-xyloside, p-nitrophenyl-beta-D-cellobioside, p-nitrophenyl-beta-D-arabinoside, p-nitrophenyl-beta-D-lactoside, p-nitrophenyl-beta-D-galacturonide, p-nitrophenyl-beta-D-glucuronide and p-nitrophenyl-alpha-D-galactoside with highest level of activity with ONPG as substrate, intermediate level of activity with PNPG and lower levels of activity with all other chromogenic nitrophenyl analogs. Able to hydrolyze 34% of milk lactose after 60 minutes at 5 degrees Celsius. The chain is Beta-galactosidase BgaP from Planococcus sp. (strain L4).